The sequence spans 227 residues: Large ribosomal subunit protein uL1 (227 aa).

It belongs to the universal ribosomal protein uL1 family. In terms of assembly, part of the 50S ribosomal subunit.

Functionally, binds directly to 23S rRNA. The L1 stalk is quite mobile in the ribosome, and is involved in E site tRNA release. Protein L1 is also a translational repressor protein, it controls the translation of the L11 operon by binding to its mRNA. The chain is Large ribosomal subunit protein uL1 from Tropheryma whipplei (strain TW08/27) (Whipple's bacillus).